Here is a 166-residue protein sequence, read N- to C-terminus: Coiled-coil domain-containing protein 12 (166 aa).

An N-acetylmethionine modification is found at M1. A coiled-coil region spans residues 8-28; that stretch reads VGRLEEEALRRKERLKALREK. The segment covering 21–53 has biased composition (basic and acidic residues); sequence RLKALREKTGRKDREDGEPQTKQLREEGEEVGK. The segment at 21–55 is disordered; that stretch reads RLKALREKTGRKDREDGEPQTKQLREEGEEVGKHR. An N6-acetyllysine modification is found at K53. K94 is covalently cross-linked (Glycyl lysine isopeptide (Lys-Gly) (interchain with G-Cter in SUMO2)). Positions 115–144 form a coiled coil; the sequence is DLKRDVAKKLEKLEKRTQRAIAELIRERLK. The disordered stretch occupies residues 146 to 166; it reads QEDSLASAVDATTGQEACDSD. 2 positions are modified to phosphoserine: S149 and S165.

In Mus musculus (Mouse), this protein is Coiled-coil domain-containing protein 12 (Ccdc12).